The following is a 651-amino-acid chain: Tudor domain-containing protein 3 (651 aa).

The UBA domain maps to 193–233 (LVDEKALKHITEMGFSKEASRQALMDNGNNLEAALNVLLTS). 3 disordered regions span residues 234 to 271 (NKQKPVMGPPLRGRGKGRGRIRSEDEEDLGNARPSAPS), 287 to 369 (EEPK…VSEV), and 381 to 450 (YSRY…TSIP). The residue at position 256 (S256) is a Phosphoserine. Residues 291–312 (SQPQQLHQGQYRSSNTEQNGVK) are compositionally biased toward polar residues. Over residues 313–338 (DNNHLRHPPRNDTRQPRNEKPPRFQR) the composition is skewed to basic and acidic residues. S345 carries the post-translational modification Phosphoserine. K470 is covalently cross-linked (Glycyl lysine isopeptide (Lys-Gly) (interchain with G-Cter in SUMO2)). The region spanning 555–615 (MWKPGDECFA…KPIQTEAWEE (61 aa)) is the Tudor domain. Basic and acidic residues predominate over residues 624 to 633 (EFRRGGDGQP). Residues 624–651 (EFRRGGDGQPRRSTRPTQQFYQPPRARN) are disordered. Residues 631–651 (GQPRRSTRPTQQFYQPPRARN) are EBM motif; may mediate interaction with the EJC.

As to quaternary structure, component of mRNA stress granules. Interacts with FMR1, FXR1, FXR2, EWSR1, FUS, SERBP1, EEF1A1 and DDX3X or DDX3Y, and with the small nuclear ribonucleoprotein-associated proteins SNRPB and SNRPN. Interacts with 'Lys-48'-linked tetra-ubiquitin, but not with monoubiquitin or 'Lys-63'-linked ubiquitin chains. May interact with the exon junction complex (EJC) composed at least of CASC3, EIF4A3, MAGOH and RBM8A. Interacts with POLR2A (via the C-terminal domain (CTD)). Post-translationally, probably cleaved by enteroviral 2A proteinase. In terms of tissue distribution, detected in heart, brain, placenta, lung, liver, skeletal muscle, kidney and pancreas.

It localises to the cytoplasm. Its subcellular location is the nucleus. Its function is as follows. Scaffolding protein that specifically recognizes and binds dimethylarginine-containing proteins. Plays a role in the regulation of translation of target mRNAs by binding Arg/Gly-rich motifs (GAR) in dimethylarginine-containing proteins. In nucleus, acts as a coactivator: recognizes and binds asymmetric dimethylation on the core histone tails associated with transcriptional activation (H3R17me2a and H4R3me2a) and recruits proteins at these arginine-methylated loci. In cytoplasm, acts as an antiviral factor that participates in the assembly of stress granules together with G3BP1. This Homo sapiens (Human) protein is Tudor domain-containing protein 3 (TDRD3).